A 597-amino-acid polypeptide reads, in one-letter code: Sulfite reductase [NADPH] flavoprotein alpha-component (597 aa).

In terms of domain architecture, Flavodoxin-like spans V62–V200. Residues S68–A73, S115–G118, and L151–C160 contribute to the FMN site. Residues E232–P446 form the FAD-binding FR-type domain. FAD-binding positions include T320, N354, R384 to S387, S402 to G404, and G417 to S420. NADP(+) is bound by residues S517 to R518, K523 to Q527, and D559. Y597 provides a ligand contact to FAD.

It belongs to the NADPH-dependent sulphite reductase flavoprotein subunit CysJ family. This sequence in the N-terminal section; belongs to the flavodoxin family. In the C-terminal section; belongs to the flavoprotein pyridine nucleotide cytochrome reductase family. Alpha(8)-beta(8). The alpha component is a flavoprotein, the beta component is a hemoprotein. FAD serves as cofactor. The cofactor is FMN.

It catalyses the reaction hydrogen sulfide + 3 NADP(+) + 3 H2O = sulfite + 3 NADPH + 4 H(+). Its pathway is sulfur metabolism; hydrogen sulfide biosynthesis; hydrogen sulfide from sulfite (NADPH route): step 1/1. Functionally, component of the sulfite reductase complex that catalyzes the 6-electron reduction of sulfite to sulfide. This is one of several activities required for the biosynthesis of L-cysteine from sulfate. The flavoprotein component catalyzes the electron flow from NADPH -&gt; FAD -&gt; FMN to the hemoprotein component. The protein is Sulfite reductase [NADPH] flavoprotein alpha-component of Mannheimia succiniciproducens (strain KCTC 0769BP / MBEL55E).